Reading from the N-terminus, the 130-residue chain is Albumin-1 D (130 aa).

The signal sequence occupies residues 1–26 (MASVKLASLIVLFATLGMFLTKNVGA). Disulfide bonds link C29–C46, C33–C48, and C41–C58. Propeptides lie at residues 64 to 69 (VFLKAN) and 123 to 130 (LLKSVSTA).

The C-terminal glycine may be removed from PA1b. In terms of tissue distribution, major component of both the cotyledons and embryonic axes of mature seeds.

In terms of biological role, PA1b binds to basic 7S globulin (BG) and stimulates its phosphorylation activity. Involved in the signal transduction system to regulate the growth and differentiation as a hormone peptide. Toxic to various insects through binding to a high affinity binding site in the insect gut. In Pisum sativum (Garden pea), this protein is Albumin-1 D.